We begin with the raw amino-acid sequence, 40 residues long: MADTTGRIPLWIIGTVAGILVIGLVGIFFYGSYSGLGSSL.

A helical membrane pass occupies residues 8 to 28 (IPLWIIGTVAGILVIGLVGIF).

The protein belongs to the PsbJ family. PSII is composed of 1 copy each of membrane proteins PsbA, PsbB, PsbC, PsbD, PsbE, PsbF, PsbH, PsbI, PsbJ, PsbK, PsbL, PsbM, PsbT, PsbX, PsbY, PsbZ, Psb30/Ycf12, at least 3 peripheral proteins of the oxygen-evolving complex and a large number of cofactors. It forms dimeric complexes.

The protein resides in the plastid. It is found in the chloroplast thylakoid membrane. Its function is as follows. One of the components of the core complex of photosystem II (PSII). PSII is a light-driven water:plastoquinone oxidoreductase that uses light energy to abstract electrons from H(2)O, generating O(2) and a proton gradient subsequently used for ATP formation. It consists of a core antenna complex that captures photons, and an electron transfer chain that converts photonic excitation into a charge separation. This Spinacia oleracea (Spinach) protein is Photosystem II reaction center protein J.